Reading from the N-terminus, the 218-residue chain is Transcription initiation factor TFIID subunit 10 (218 aa).

Low complexity-rich tracts occupy residues 1–21 and 29–39; these read MSCSGSGADPEAAPASAASAP and APAALPSSTAA. Residues 1 to 85 form a disordered region; sequence MSCSGSGADP…GAAPVSAGGA (85 aa). S2 is subject to N-acetylserine. S44 is modified (phosphoserine). Phosphothreonine is present on T48. Gly residues predominate over residues 48-62; the sequence is TAGGPGAGAAAGGTG. Positions 187–189 match the [KR]-[STA]-K motif motif; sequence KSK. Residue K189 is modified to Allysine; alternate. Residue K189 is modified to N6,N6,N6-trimethyllysine; alternate.

This sequence belongs to the TAF10 family. Component of the TFIID basal transcription factor complex, composed of TATA-box-binding protein TBP, and a number of TBP-associated factors (TAFs), including TAF1, TAF2, TAF3, TAF4, TAF5, TAF6, TAF7, TAF8, TAF9, TAF10, TAF11, TAF12 and TAF13. Component of the TATA-binding protein-free TAF complex (TFTC), the PCAF histone acetylase complex and the STAGA transcription coactivator-HAT complex. The PCAF complex consists at least of TADA2L/ADA2, TADA3L/ADA3, SUPT3H, TAF5L TAF6L, TAF9, TAF10, TAF12 and TRRAP. The TFTC-HAT complex consists at least of TAF5L, TAF6L, TADA3L, SUPT3H, TAF2, TAF4, TAF5, GCN5L2/GCN5, TAF10 and TRRAP. The STAGA transcription coactivator-HAT complex consists at least of SUPT3H, GCN5L2, TAF5L, TAF6L, SUPT7L, TADA3L, TAD1L, TAF10, TAF12, TRRAP and TAF9. The STAGA core complex is associated with a subcomplex required for histone deubiquitination composed of ATXN7L3, ENY2 and USP22. Interacts with TAF3. Interacts with LOXL2. Interacts with TAF12 isoform TAFII20; the interaction is direct. In terms of processing, monomethylated at Lys-189 by SETD7, leading to increased affinity for RNA polymerase II. Lysine deamination at Lys-189 to form allysine is mediated by LOXL2. Allysine formation by LOXL2 results in release of TAF10 from promoters, leading to inhibition of TFIID-dependent transcription.

The protein resides in the nucleus. Functionally, the TFIID basal transcription factor complex plays a major role in the initiation of RNA polymerase II (Pol II)-dependent transcription. TFIID recognizes and binds promoters with or without a TATA box via its subunit TBP, a TATA-box-binding protein, and promotes assembly of the pre-initiation complex (PIC). The TFIID complex consists of TBP and TBP-associated factors (TAFs), including TAF1, TAF2, TAF3, TAF4, TAF5, TAF6, TAF7, TAF8, TAF9, TAF10, TAF11, TAF12 and TAF13. TAF10 is also component of the PCAF histone acetylase complex, the TATA-binding protein-free TAF complex (TFTC) and the STAGA transcription coactivator-HAT complex. May regulate cyclin E expression. This chain is Transcription initiation factor TFIID subunit 10 (TAF10), found in Homo sapiens (Human).